The chain runs to 147 residues: MALKAQNTISGKEGRLFLDGEEMAHIKTFEANVEKNKSEVNIMGRRMTGHKTTGANGTGTATFYKVTSQFVLIMMDYVKKGSDPYFTLQAVLDDASSGRGTERVTLYDVNFDSAKIAGLDVDSEALEEEVPFTFEDFDVPEQLKSTF.

It to B.subtilis XkdM.

This is an uncharacterized protein from Bacillus subtilis (strain 168).